A 245-amino-acid chain; its full sequence is Probable phosphatase Ent638_1550 (245 aa).

Zn(2+) is bound by residues His7, His9, His15, His40, Glu73, His101, His131, Asp192, and His194.

Belongs to the PHP family. Homotrimer. Requires Zn(2+) as cofactor.

This chain is Probable phosphatase Ent638_1550, found in Enterobacter sp. (strain 638).